The following is a 692-amino-acid chain: Elongation factor G (692 aa).

One can recognise a tr-type G domain in the interval 8 to 282; that stretch reads ENTRNIGIMA…AVIDYLPSPL (275 aa). Residues 17–24, 81–85, and 135–138 each bind GTP; these read AHIDAGKT, DTPGH, and NKMD.

It belongs to the TRAFAC class translation factor GTPase superfamily. Classic translation factor GTPase family. EF-G/EF-2 subfamily.

It is found in the cytoplasm. Its function is as follows. Catalyzes the GTP-dependent ribosomal translocation step during translation elongation. During this step, the ribosome changes from the pre-translocational (PRE) to the post-translocational (POST) state as the newly formed A-site-bound peptidyl-tRNA and P-site-bound deacylated tRNA move to the P and E sites, respectively. Catalyzes the coordinated movement of the two tRNA molecules, the mRNA and conformational changes in the ribosome. This chain is Elongation factor G, found in Bacillus anthracis (strain CDC 684 / NRRL 3495).